We begin with the raw amino-acid sequence, 220 residues long: Type-4 uracil-DNA glycosylase (220 aa).

C14 and C17 together coordinate [4Fe-4S] cluster. Residues 41 to 43 (GEA), F55, and N82 contribute to the uracil site. [4Fe-4S] cluster-binding residues include C86 and C102. H164 contacts uracil.

It belongs to the uracil-DNA glycosylase (UDG) superfamily. Type 4 (UDGa) family.

The catalysed reaction is Hydrolyzes single-stranded DNA or mismatched double-stranded DNA and polynucleotides, releasing free uracil.. Removes uracil bases that are present in DNA as a result of either deamination of cytosine or misincorporation of dUMP instead of dTMP. The protein is Type-4 uracil-DNA glycosylase of Sulfurisphaera tokodaii (strain DSM 16993 / JCM 10545 / NBRC 100140 / 7) (Sulfolobus tokodaii).